A 237-amino-acid polypeptide reads, in one-letter code: MFEWIADPEAWISLVTLAALEIVLGIDNIIFINILVGRLPERQRQSGRILGLALAMLTRILLLMSLAWIMKLTAPLFTVFNQEISGRDLILLIGGLFLIIKSSGEIKEAINHQEHHESESKNKVSYLGVLIQIAVLDIVFSLDSVITAVGMASHLPVMILAIMIAVGVMMFAAKPIGDFVDTHPTLKILALAFLVLVGISLIAESLDIHIPKGYIYFAMGFSVVVEMINIRMRRLMK.

The next 7 membrane-spanning stretches (helical) occupy residues 12–32 (ISLVTLAALEIVLGIDNIIFI), 49–69 (ILGLALAMLTRILLLMSLAWI), 90–110 (ILLIGGLFLIIKSSGEIKEAI), 126–146 (YLGVLIQIAVLDIVFSLDSVI), 151–171 (MASHLPVMILAIMIAVGVMMF), 188–208 (ILALAFLVLVGISLIAESLDI), and 210–230 (IPKGYIYFAMGFSVVVEMINI).

It belongs to the UPF0053 family.

It is found in the cell membrane. In Haemophilus influenzae (strain ATCC 51907 / DSM 11121 / KW20 / Rd), this protein is UPF0053 protein HI_0056.